The primary structure comprises 142 residues: Nucleoside diphosphate kinase (142 aa).

ATP contacts are provided by Lys11, Phe59, Arg87, Thr93, Arg104, and Asn114. The active-site Pros-phosphohistidine intermediate is the His117.

It belongs to the NDK family. Homotetramer. The cofactor is Mg(2+).

It localises to the cytoplasm. The enzyme catalyses a 2'-deoxyribonucleoside 5'-diphosphate + ATP = a 2'-deoxyribonucleoside 5'-triphosphate + ADP. It carries out the reaction a ribonucleoside 5'-diphosphate + ATP = a ribonucleoside 5'-triphosphate + ADP. Functionally, major role in the synthesis of nucleoside triphosphates other than ATP. The ATP gamma phosphate is transferred to the NDP beta phosphate via a ping-pong mechanism, using a phosphorylated active-site intermediate. This is Nucleoside diphosphate kinase from Aeromonas hydrophila subsp. hydrophila (strain ATCC 7966 / DSM 30187 / BCRC 13018 / CCUG 14551 / JCM 1027 / KCTC 2358 / NCIMB 9240 / NCTC 8049).